The chain runs to 194 residues: ATP-dependent Clp protease proteolytic subunit 4 (194 aa).

The active-site Nucleophile is serine 100. Histidine 125 is a catalytic residue.

The protein belongs to the peptidase S14 family. As to quaternary structure, fourteen ClpP subunits assemble into 2 heptameric rings which stack back to back to give a disk-like structure with a central cavity, resembling the structure of eukaryotic proteasomes.

It localises to the cytoplasm. It carries out the reaction Hydrolysis of proteins to small peptides in the presence of ATP and magnesium. alpha-casein is the usual test substrate. In the absence of ATP, only oligopeptides shorter than five residues are hydrolyzed (such as succinyl-Leu-Tyr-|-NHMec, and Leu-Tyr-Leu-|-Tyr-Trp, in which cleavage of the -Tyr-|-Leu- and -Tyr-|-Trp bonds also occurs).. Its function is as follows. Cleaves peptides in various proteins in a process that requires ATP hydrolysis. Has a chymotrypsin-like activity. Plays a major role in the degradation of misfolded proteins. This is ATP-dependent Clp protease proteolytic subunit 4 from Rhodococcus jostii (strain RHA1).